We begin with the raw amino-acid sequence, 542 residues long: CTP synthase (542 aa).

Positions 1–265 (MARYVFITGG…DSEVLSAFGI (265 aa)) are amidoligase domain. CTP is bound at residue serine 13. Residue serine 13 coordinates UTP. 14–19 (SLGKGI) serves as a coordination point for ATP. Tyrosine 54 contacts L-glutamine. ATP is bound at residue aspartate 71. Mg(2+) contacts are provided by aspartate 71 and glutamate 139. CTP is bound by residues 146–148 (DIE), 186–191 (KTKPTQ), and lysine 222. Residues 186–191 (KTKPTQ) and lysine 222 contribute to the UTP site. The 251-residue stretch at 291 to 541 (TIAIVGKYTG…IEAAIEQSRL (251 aa)) folds into the Glutamine amidotransferase type-1 domain. Residue glycine 353 coordinates L-glutamine. Residue cysteine 380 is the Nucleophile; for glutamine hydrolysis of the active site. L-glutamine is bound by residues 381–384 (FGMQ), glutamate 404, and arginine 469. Residues histidine 514 and glutamate 516 contribute to the active site.

The protein belongs to the CTP synthase family. As to quaternary structure, homotetramer.

The enzyme catalyses UTP + L-glutamine + ATP + H2O = CTP + L-glutamate + ADP + phosphate + 2 H(+). It catalyses the reaction L-glutamine + H2O = L-glutamate + NH4(+). It carries out the reaction UTP + NH4(+) + ATP = CTP + ADP + phosphate + 2 H(+). It functions in the pathway pyrimidine metabolism; CTP biosynthesis via de novo pathway; CTP from UDP: step 2/2. Allosterically activated by GTP, when glutamine is the substrate; GTP has no effect on the reaction when ammonia is the substrate. The allosteric effector GTP functions by stabilizing the protein conformation that binds the tetrahedral intermediate(s) formed during glutamine hydrolysis. Inhibited by the product CTP, via allosteric rather than competitive inhibition. Catalyzes the ATP-dependent amination of UTP to CTP with either L-glutamine or ammonia as the source of nitrogen. Regulates intracellular CTP levels through interactions with the four ribonucleotide triphosphates. The chain is CTP synthase from Brucella anthropi (strain ATCC 49188 / DSM 6882 / CCUG 24695 / JCM 21032 / LMG 3331 / NBRC 15819 / NCTC 12168 / Alc 37) (Ochrobactrum anthropi).